Here is a 330-residue protein sequence, read N- to C-terminus: Uracil-DNA glycosylase, mitochondrial (330 aa).

The N-terminal 49 residues, 1 to 49, are a transit peptide targeting the mitochondrion; sequence MASSTPKTLMDFFQPAKRLKASPSSSSFPAVSVAGGSRDLGSVANSPPR. The Proton acceptor role is filled by Asp-173.

It belongs to the uracil-DNA glycosylase (UDG) superfamily. UNG family.

The protein localises to the mitochondrion. It catalyses the reaction Hydrolyzes single-stranded DNA or mismatched double-stranded DNA and polynucleotides, releasing free uracil.. With respect to regulation, inhidited by the small peptide uracil-DNA-glycosylase inhibitor (Ugi). Its function is as follows. Excises uracil residues from the DNA which can arise as a result of misincorporation of dUMP residues by DNA polymerase or due to deamination of cytosine. More active on U:G, U:T and U:C mispairs than on U:A pairs. Highly specific for uracil and no activity with 5-substituted uracil or cytosine derivatives. Required for initiation of base excision repair (BER) of uracil. This is Uracil-DNA glycosylase, mitochondrial from Arabidopsis thaliana (Mouse-ear cress).